The primary structure comprises 1638 residues: Ciliary rootlet coiled-coil protein 2 (1638 aa).

The span at 1–20 (MSSTSSNPDDGDTTEQSQLG) shows a compositional bias: polar residues. Disordered stretches follow at residues 1–21 (MSSTSSNPDDGDTTEQSQLGL), 39–92 (REDR…REES), 396–423 (ARLRSPPRSVSPHQRMSPARTSSPTSLH), and 1168–1213 (TRRK…NLQE). Residues 67–82 (SSSLGEEPLSGLREPP) show a composition bias toward low complexity. The stretch at 85–144 (TSHAREESELLQEELTRLEDLLAQADAEREELASRCHMVSQRLQARLDTTEARLRKSELE) forms a coiled coil. A compositionally biased stretch (polar residues) spans 406–421 (SPHQRMSPARTSSPTS). Coiled coils occupy residues 426 to 1234 (LQAV…VQKE) and 1281 to 1315 (LQEASNQADSLQRSLDNACSRVHVLEQELAKAEGA). Basic and acidic residues predominate over residues 1180–1193 (RTLEAENQRKRQEV). Disordered regions lie at residues 1338–1383 (RNLL…VPVD) and 1506–1551 (ALEE…QTTS). Positions 1349 to 1371 (SPTTGSSQTRPGRQRTSPPTRSY) are enriched in polar residues. 2 coiled-coil regions span residues 1412–1506 (RDNS…LRQA) and 1542–1576 (RRALREQTTSLRTERARLQGELAALRTRLIQTEQE).

Belongs to the rootletin family.

This is Ciliary rootlet coiled-coil protein 2 from Mus musculus (Mouse).